Reading from the N-terminus, the 406-residue chain is Cysteine desulfurase (406 aa).

The residue at position 226 (K226) is an N6-(pyridoxal phosphate)lysine. Catalysis depends on C364, which acts as the Cysteine persulfide intermediate.

Belongs to the class-V pyridoxal-phosphate-dependent aminotransferase family. Csd subfamily. In terms of assembly, homodimer. Interacts with SufE and the SufBCD complex composed of SufB, SufC and SufD. The interaction with SufE is required to mediate the direct transfer of the sulfur atom from the S-sulfanylcysteine. The cofactor is pyridoxal 5'-phosphate.

Its subcellular location is the cytoplasm. It carries out the reaction (sulfur carrier)-H + L-cysteine = (sulfur carrier)-SH + L-alanine. It catalyses the reaction L-selenocysteine + AH2 = hydrogenselenide + L-alanine + A + H(+). The protein operates within cofactor biosynthesis; iron-sulfur cluster biosynthesis. Functionally, cysteine desulfurases mobilize the sulfur from L-cysteine to yield L-alanine, an essential step in sulfur metabolism for biosynthesis of a variety of sulfur-containing biomolecules. Component of the suf operon, which is activated and required under specific conditions such as oxidative stress and iron limitation. Acts as a potent selenocysteine lyase in vitro, that mobilizes selenium from L-selenocysteine. Selenocysteine lyase activity is however unsure in vivo. The sequence is that of Cysteine desulfurase from Yersinia pseudotuberculosis serotype IB (strain PB1/+).